Reading from the N-terminus, the 440-residue chain is Asparagine--tRNA ligase (440 aa).

The protein belongs to the class-II aminoacyl-tRNA synthetase family. Homodimer.

The protein resides in the cytoplasm. It catalyses the reaction tRNA(Asn) + L-asparagine + ATP = L-asparaginyl-tRNA(Asn) + AMP + diphosphate + H(+). This chain is Asparagine--tRNA ligase, found in Chloroflexus aurantiacus (strain ATCC 29364 / DSM 637 / Y-400-fl).